The sequence spans 83 residues: Large ribosomal subunit protein eL14 (83 aa).

This sequence belongs to the eukaryotic ribosomal protein eL14 family. As to quaternary structure, part of the 50S ribosomal subunit.

The protein is Large ribosomal subunit protein eL14 of Thermococcus kodakarensis (strain ATCC BAA-918 / JCM 12380 / KOD1) (Pyrococcus kodakaraensis (strain KOD1)).